The chain runs to 312 residues: Aquaporin Lacbi1:391485 (312 aa).

Over 1 to 50 (MDDKFDDDALPNSKTTPEDYGDKLAEYDYTNTFPNTWMRLREPFREYIAE) the chain is Cytoplasmic. The chain crosses the membrane as a helical span at residues 51 to 71 (FVGVAVLIIFGVGADCQVVLS). The Extracellular segment spans residues 72 to 89 (ANTGVAPSPKGDYLSLNC). The helical transmembrane segment at 90 to 110 (GWAIGTAMGVWISGGISGGHI) threads the bilayer. Positions 111–113 (NPA) match the NPA 1 motif. The Cytoplasmic segment spans residues 111–128 (NPAVTLALMAWRGFPWWK). The chain crosses the membrane as a helical span at residues 129–149 (VPGFIFAQLLGGIVGAGLVYV). Residues 150-183 (NYIHAIDIVEGGRHIRTLDTAGLFATYAADYMTN) lie on the Extracellular side of the membrane. A glycan (N-linked (GlcNAc...) asparagine) is linked at asparagine 183. A helical transmembrane segment spans residues 184–204 (VSCFFSEFLATAVLIVVIHAM). Residues 205-213 (NDKRNAPPP) lie on the Cytoplasmic side of the membrane. A helical transmembrane segment spans residues 214-234 (AGLAPLVLFFLILGIGASLGM). Residues 235-267 (ETGYAINPARDLGPRMLTAMVGYGRQVFAFRNQ) are Extracellular-facing. Positions 241-243 (NPA) match the NPA 2 motif. Residues 268–288 (YWIWCPVIAPFLGAQVGTIFY) form a helical membrane-spanning segment. Over 289–312 (DLFFYKGQDNVFGRLGSHIHISPA) the chain is Cytoplasmic.

The protein belongs to the MIP/aquaporin (TC 1.A.8) family.

The protein resides in the membrane. It catalyses the reaction H2O(in) = H2O(out). It carries out the reaction glycerol(in) = glycerol(out). The catalysed reaction is NH4(+)(in) = NH4(+)(out). Functionally, water channel required to facilitate the transport of water across membranes. In addition to water, also shows strong glycerol and ammonium transport activities. May be involved in fungal nitrogen (ammonium) support of the plant host in symbiosis. Glycerol accumulation has never been observed in ectomycorrhizal (ECM) fungi, therefore, glycerol permeability of Lacbi1:391485 might be a relict of the affiliation of the protein to the group of aquaglyceroporins, and other osmotic active compounds (e.g. trehalose or mannitol) may have taken over glycerol function in ECM fungi. The protein is Aquaporin Lacbi1:391485 of Laccaria bicolor (strain S238N-H82 / ATCC MYA-4686) (Bicoloured deceiver).